Reading from the N-terminus, the 628-residue chain is EF-hand calcium-binding domain-containing protein 7 (628 aa).

Residues 1-22 (MASNPGSDAALGTQNPLLSGSP) show a composition bias toward polar residues. The disordered stretch occupies residues 1 to 24 (MASNPGSDAALGTQNPLLSGSPRT). EF-hand domains are found at residues 102 to 137 (TSKA…RGEK) and 138 to 173 (MTQE…TSEQ). Residues 192–231 (QFGSHMEGSPERGPSPAPKPSPRVIRKNDQETFSSKGDTS) are disordered. 2 positions are modified to phosphoserine: serine 200 and serine 212. The segment covering 222-231 (ETFSSKGDTS) has biased composition (polar residues). Positions 402–437 (EFRSTLSEIFEVIDLDGNGLISLEEYNFFELRTSGE) constitute an EF-hand 3 domain. Ca(2+) contacts are provided by aspartate 415, aspartate 417, asparagine 419, and glutamate 426.

In terms of assembly, component of the EvC complex composed of EFCAB7, IQCE, EVC2 and EVC; built from two subcomplexes, EVC2:EVC and EFCAB7:IQCE. Interacts (via EF-hand 1 and 2) with IQCE (via N-terminus); this interaction anchors the EVC-EVC2 complex in a signaling microdomain at the base of cilia and stimulates the Hedgehog (Hh) pathway. Interacts with EVC2 (via N-terminal end). Interacts with EVC.

Its subcellular location is the cell projection. It is found in the cilium membrane. Functionally, component of the EvC complex that positively regulates ciliary Hedgehog (Hh) signaling. Required for the localization of the EVC2:EVC subcomplex at the base of primary cilia. This is EF-hand calcium-binding domain-containing protein 7 (Efcab7) from Mus musculus (Mouse).